A 227-amino-acid polypeptide reads, in one-letter code: PKHD-type hydroxylase Caul_0045 (227 aa).

A Fe2OG dioxygenase domain is found at 78–178; that stretch reads TILSPLFNRY…RTASFFWIQS (101 aa). Fe cation is bound by residues H96, D98, and H159. Position 169 (R169) interacts with 2-oxoglutarate.

Fe(2+) serves as cofactor. Requires L-ascorbate as cofactor.

The protein is PKHD-type hydroxylase Caul_0045 of Caulobacter sp. (strain K31).